A 180-amino-acid polypeptide reads, in one-letter code: Oligoribonuclease (180 aa).

The region spanning 7–170 (LIWIDLEMTG…DDIRESIAEL (164 aa)) is the Exonuclease domain. The active site involves Y128.

It belongs to the oligoribonuclease family.

The protein localises to the cytoplasm. Functionally, 3'-to-5' exoribonuclease specific for small oligoribonucleotides. The protein is Oligoribonuclease of Pseudomonas paraeruginosa (strain DSM 24068 / PA7) (Pseudomonas aeruginosa (strain PA7)).